The primary structure comprises 164 residues: V-type proton ATPase subunit c' (164 aa).

At 1–16 the chain is on the lumenal side; it reads MDMVASDNVYAPLYAP. The helical transmembrane segment at 17–37 threads the bilayer; that stretch reads FFGFAGCALAMILSCLGAAIG. Over 38–59 the chain is Cytoplasmic; sequence TAKSGIGIAGIGTFKPELIMKS. A helical membrane pass occupies residues 60–80; that stretch reads LIPVVMSGILAIYGLVVAVLI. At 81 to 98 the chain is on the lumenal side; sequence AGNLSPTEEYTLFNGFMH. Residues 99-119 form a helical membrane-spanning segment; the sequence is LSCGLCVGFACLSSGYAIGIV. The Cytoplasmic segment spans residues 120–136; the sequence is GDVGVRKYMHQPRLFVG. Residues 137–157 traverse the membrane as a helical segment; sequence IVLILIFSEVLGLYGMIIALI. At 158–164 the chain is on the lumenal side; the sequence is LNTKGSE.

Belongs to the V-ATPase proteolipid subunit family. V-ATPase is a heteromultimeric enzyme composed of a peripheral catalytic V1 complex (components A to H) attached to an integral membrane V0 proton pore complex (components: a, c, c', c'', d, e, f and VOA1). The decameric c-ring forms the proton-conducting pore, and is composed of eight proteolipid subunits c, one subunit c' and one subunit c''.

Its subcellular location is the vacuole membrane. In terms of biological role, proton-conducting pore forming subunit of the V0 complex of vacuolar(H+)-ATPase (V-ATPase), a multisubunit enzyme composed of a peripheral complex (V1) that hydrolyzes ATP and a membrane integral complex (V0) that translocates protons. V-ATPase is responsible for acidifying and maintaining the pH of intracellular compartments. The chain is V-type proton ATPase subunit c' (VMA11) from Candida glabrata (strain ATCC 2001 / BCRC 20586 / JCM 3761 / NBRC 0622 / NRRL Y-65 / CBS 138) (Yeast).